The primary structure comprises 237 residues: Probable transcriptional regulatory protein Exig_1693 (237 aa).

This sequence belongs to the TACO1 family. YeeN subfamily.

It is found in the cytoplasm. The chain is Probable transcriptional regulatory protein Exig_1693 from Exiguobacterium sibiricum (strain DSM 17290 / CCUG 55495 / CIP 109462 / JCM 13490 / 255-15).